Reading from the N-terminus, the 354-residue chain is Rhodopsin (354 aa).

The Extracellular segment spans residues 1–36; the sequence is MNGTEGENFYIPMSNKTGVVRSPFDYPQYYLAEPWK. 2 N-linked (GlcNAc...) asparagine glycosylation sites follow: Asn-2 and Asn-15. Residues 37–61 form a helical membrane-spanning segment; sequence FSVLAAYMFFLIIAGFPVNFLTLYV. Over 62 to 73 the chain is Cytoplasmic; that stretch reads TIQHKKLRQPLN. A helical transmembrane segment spans residues 74-96; that stretch reads YILLNLAVADLFMIFGGFPSTMI. At 97–110 the chain is on the extracellular side; it reads TSMNGYFVFGPSGC. A disulfide bridge connects residues Cys-110 and Cys-187. A helical transmembrane segment spans residues 111-133; that stretch reads NFEGFFATLGGEIGLWSLVVLAI. A 'Ionic lock' involved in activated form stabilization motif is present at residues 134–136; that stretch reads ERY. Topologically, residues 134-152 are cytoplasmic; the sequence is ERYVVVCKPMSNFRFGSQH. Residues 153–173 traverse the membrane as a helical segment; that stretch reads AFMGVGLTWIMAMACAFPPLV. Residues 174–202 lie on the Extracellular side of the membrane; sequence GWSRYIPEGMQCSCGIDYYTLKPEVNNES. An N-linked (GlcNAc...) asparagine glycan is attached at Asn-200. A helical membrane pass occupies residues 203–224; it reads FVIYMFVVHFSIPLTIIFFCYG. Residues 225-252 lie on the Cytoplasmic side of the membrane; it reads RLVCTVKEAAAQQQESETTQRAEREVTR. Residues 253–274 traverse the membrane as a helical segment; it reads MVIIMVIAFLICWLPYASVAFF. Over 275 to 286 the chain is Extracellular; sequence IFCNQGSEFGPI. The chain crosses the membrane as a helical span at residues 287–308; that stretch reads FMTIPAFFAKAASLYNPLIYIL. Lys-296 carries the post-translational modification N6-(retinylidene)lysine. Topologically, residues 309-354 are cytoplasmic; that stretch reads MNKQFRNCMITTICCGKNPFEEEESTSASASKTEASSVSSSQVAPA. S-palmitoyl cysteine attachment occurs at residues Cys-322 and Cys-323. The disordered stretch occupies residues 333–354; sequence STSASASKTEASSVSSSQVAPA. Low complexity predominate over residues 334-354; that stretch reads TSASASKTEASSVSSSQVAPA.

The protein belongs to the G-protein coupled receptor 1 family. Opsin subfamily. In terms of processing, phosphorylated on some or all of the serine and threonine residues present in the C-terminal region. Contains one covalently linked retinal chromophore.

It is found in the membrane. The protein resides in the cell projection. It localises to the cilium. The protein localises to the photoreceptor outer segment. Its function is as follows. Photoreceptor required for image-forming vision at low light intensity. While most salt water fish species use retinal as chromophore, most freshwater fish use 3-dehydroretinal, or a mixture of retinal and 3-dehydroretinal. Light-induced isomerization of 11-cis to all-trans retinal triggers a conformational change that activates signaling via G-proteins. Subsequent receptor phosphorylation mediates displacement of the bound G-protein alpha subunit by arrestin and terminates signaling. In Scyliorhinus canicula (Small-spotted catshark), this protein is Rhodopsin (rho).